Consider the following 142-residue polypeptide: Large ribosomal subunit protein uL11 (142 aa).

The protein belongs to the universal ribosomal protein uL11 family. As to quaternary structure, part of the ribosomal stalk of the 50S ribosomal subunit. Interacts with L10 and the large rRNA to form the base of the stalk. L10 forms an elongated spine to which L12 dimers bind in a sequential fashion forming a multimeric L10(L12)X complex. One or more lysine residues are methylated.

Functionally, forms part of the ribosomal stalk which helps the ribosome interact with GTP-bound translation factors. This is Large ribosomal subunit protein uL11 from Aeromonas hydrophila subsp. hydrophila (strain ATCC 7966 / DSM 30187 / BCRC 13018 / CCUG 14551 / JCM 1027 / KCTC 2358 / NCIMB 9240 / NCTC 8049).